Here is a 227-residue protein sequence, read N- to C-terminus: Protein FdhD (227 aa).

Mo-bis(molybdopterin guanine dinucleotide) is bound at residue Phe-210–Lys-215.

This sequence belongs to the FdhD family.

The protein resides in the cytoplasm. Required for formate dehydrogenase (FDH) activity. This is Protein FdhD from Methanocaldococcus jannaschii (strain ATCC 43067 / DSM 2661 / JAL-1 / JCM 10045 / NBRC 100440) (Methanococcus jannaschii).